Here is a 128-residue protein sequence, read N- to C-terminus: Small ribosomal subunit protein uS11 (128 aa).

This sequence belongs to the universal ribosomal protein uS11 family. Part of the 30S ribosomal subunit. Interacts with proteins S7 and S18. Binds to IF-3.

Its function is as follows. Located on the platform of the 30S subunit, it bridges several disparate RNA helices of the 16S rRNA. Forms part of the Shine-Dalgarno cleft in the 70S ribosome. The chain is Small ribosomal subunit protein uS11 from Methylococcus capsulatus (strain ATCC 33009 / NCIMB 11132 / Bath).